The following is a 356-amino-acid chain: Myricetin 7/4'-O-methyltransferase 2 (356 aa).

Asp-222 lines the S-adenosyl-L-methionine pocket. Residue His-260 is the Proton acceptor of the active site.

It belongs to the class I-like SAM-binding methyltransferase superfamily. Cation-independent O-methyltransferase family. Homodimer.

It carries out the reaction quercetin + S-adenosyl-L-methionine = rhamnetin + S-adenosyl-L-homocysteine + H(+). It catalyses the reaction kaempferol + S-adenosyl-L-methionine = kaempferide + S-adenosyl-L-homocysteine + H(+). The enzyme catalyses myricetin + S-adenosyl-L-methionine = 7-O-methylmyricetin + S-adenosyl-L-homocysteine + H(+). The catalysed reaction is kaempferide + S-adenosyl-L-methionine = 7,4'-O-dimethylkaempferol + S-adenosyl-L-homocysteine + H(+). It carries out the reaction isorhamnetin + S-adenosyl-L-methionine = 3',4'-O-dimethylquercetin + S-adenosyl-L-homocysteine + 2 H(+). It catalyses the reaction 3',4',5,7-tetrahydroxy-3-methoxyflavone + S-adenosyl-L-methionine = 3',4',5-trihydroxy-3,7-dimethoxyflavone + S-adenosyl-L-homocysteine + H(+). The enzyme catalyses rhamnetin + S-adenosyl-L-methionine = 7,4'-O-dimethylquercetin + S-adenosyl-L-homocysteine + H(+). The catalysed reaction is syringetin + S-adenosyl-L-methionine = 7,3',5'-O-trimethylmyricetin + S-adenosyl-L-homocysteine + H(+). It carries out the reaction 3',4',5'-O-trimethylmyricetin + S-adenosyl-L-methionine = 7,3',4',5'-O-tetramethylmyricetin + S-adenosyl-L-homocysteine. Its pathway is flavonoid metabolism. In terms of biological role, flavonoid 7/4'-O-methyltransferase involved in the biosynthesis of polymethoxylated flavonoids natural products such as myricetin derivatives, aroma compounds possessing antioxidant properties and exhibiting pharmacological activities such as anti-carcinogen, anti-viral, anti-thrombotic, anti-diabetic, anti-atherosclerotic, and anti-inflammatory effects. Catalyzes S-adenosylmethionine-dependent regioselective 7/4'-O-methylation of flavonoids; active on various hydroxylated flavonoid substrates. The polypeptide is Myricetin 7/4'-O-methyltransferase 2 (Solanum lycopersicum (Tomato)).